The chain runs to 91 residues: UPF0250 protein PputW619_0619 (91 aa).

This sequence belongs to the UPF0250 family.

This chain is UPF0250 protein PputW619_0619, found in Pseudomonas putida (strain W619).